Here is a 167-residue protein sequence, read N- to C-terminus: UPF0114 protein in repA1-repA2 intergenic region (167 aa).

The next 3 helical transmembrane spans lie at 15-35 (LMFP…LKFF), 53-73 (LVLI…LVMV), and 136-156 (IILC…MAYI).

This sequence belongs to the UPF0114 family.

It is found in the cell membrane. The sequence is that of UPF0114 protein in repA1-repA2 intergenic region from Buchnera aphidicola subsp. Pterocomma populeum.